The primary structure comprises 437 residues: Phosphoglucosamine mutase (437 aa).

Residue Ser101 is the Phosphoserine intermediate of the active site. Mg(2+) is bound by residues Ser101, Asp234, Asp236, and Asp238. A Phosphoserine modification is found at Ser101.

Belongs to the phosphohexose mutase family. Mg(2+) serves as cofactor. In terms of processing, activated by phosphorylation.

It carries out the reaction alpha-D-glucosamine 1-phosphate = D-glucosamine 6-phosphate. Catalyzes the conversion of glucosamine-6-phosphate to glucosamine-1-phosphate. This chain is Phosphoglucosamine mutase, found in Thermus thermophilus (strain ATCC 27634 / DSM 579 / HB8).